The primary structure comprises 319 residues: Protein SODIUM POTASSIUM ROOT DEFECTIVE 1 (319 aa).

The span at 1–13 shows a compositional bias: polar residues; sequence MLCASQASTTTLC. 2 disordered regions span residues 1–113 and 191–248; these read MLCA…TPQG and SPDN…NSSS. Low complexity predominate over residues 14–27; sequence STMDQTSQPSSSSS. A compositionally biased stretch (basic and acidic residues) spans 36-49; that stretch reads AIDRHNPIIRDGRR. The span at 58–67 shows a compositional bias: low complexity; the sequence is LNPSSSSSST. Composition is skewed to polar residues over residues 104-113 and 200-210; these read SCFSSDTPQG and TKASPTASLSS. Residues 224-242 are compositionally biased toward pro residues; that stretch reads SPPPPPPPSPPQSSPPSPP. Residues 249–315 enclose the HMA domain; that stretch reads DQVVVLRVSL…KVKNAQFWPE (67 aa). Residues Cys-260 and Cys-263 each contribute to the Zn(2+) site.

In terms of assembly, interacts with FT, but not with TSF (TWIN SISTER OF FT). In terms of tissue distribution, expressed in vascular tissues of cotyledons, rosette leaves and roots in developing seedlings before and during the floral transition. Expressed specifically in the phloem companion cells. Not detected in embryos or seeds. Not detected in the vegetative shoot apex.

The protein localises to the cytoplasm. The protein resides in the nucleus. It localises to the endoplasmic reticulum. In terms of biological role, required for root meristem maintenance after germination. Involved in phloem translocation, starch accumulation and flowering. Promotes flowering in the photoperiod pathway. Regulates long-distance movement of FT from leaves to the shoot apex through the phloem stream. The polypeptide is Protein SODIUM POTASSIUM ROOT DEFECTIVE 1 (Arabidopsis thaliana (Mouse-ear cress)).